The sequence spans 298 residues: Porphobilinogen deaminase (298 aa).

Residue cysteine 242 is modified to S-(dipyrrolylmethanemethyl)cysteine.

This sequence belongs to the HMBS family. As to quaternary structure, monomer. It depends on dipyrromethane as a cofactor.

The enzyme catalyses 4 porphobilinogen + H2O = hydroxymethylbilane + 4 NH4(+). It functions in the pathway porphyrin-containing compound metabolism; protoporphyrin-IX biosynthesis; coproporphyrinogen-III from 5-aminolevulinate: step 2/4. In terms of biological role, tetrapolymerization of the monopyrrole PBG into the hydroxymethylbilane pre-uroporphyrinogen in several discrete steps. The sequence is that of Porphobilinogen deaminase from Fusobacterium nucleatum subsp. nucleatum (strain ATCC 25586 / DSM 15643 / BCRC 10681 / CIP 101130 / JCM 8532 / KCTC 2640 / LMG 13131 / VPI 4355).